A 253-amino-acid chain; its full sequence is 5-oxoprolinase subunit A (253 aa).

The protein belongs to the LamB/PxpA family. In terms of assembly, forms a complex composed of PxpA, PxpB and PxpC.

It catalyses the reaction 5-oxo-L-proline + ATP + 2 H2O = L-glutamate + ADP + phosphate + H(+). Its function is as follows. Catalyzes the cleavage of 5-oxoproline to form L-glutamate coupled to the hydrolysis of ATP to ADP and inorganic phosphate. The chain is 5-oxoprolinase subunit A from Bacillus cereus (strain ATCC 10987 / NRS 248).